We begin with the raw amino-acid sequence, 787 residues long: ATP-dependent zinc metalloprotease FtsH (787 aa).

Residues 1–5 (MNRKN) lie on the Cytoplasmic side of the membrane. A helical transmembrane segment spans residues 6-26 (VIRMVTAIAVVVLLGWSFFYF). Topologically, residues 27-110 (SDDTRGYKFV…KVTTAVNEGS (84 aa)) are extracellular. The helical transmembrane segment at 111–131 (ILGELLVYVLPLLLLVGLFVM) threads the bilayer. Residues 132–787 (FSRMQGGARM…VSPSNPPAHG (656 aa)) lie on the Cytoplasmic side of the membrane. Residue 203-210 (GPPGTGKT) participates in ATP binding. H425 is a binding site for Zn(2+). E426 is a catalytic residue. The Zn(2+) site is built by H429 and D501. A disordered region spans residues 616–787 (DFGGRIPSDK…VSPSNPPAHG (172 aa)). 2 stretches are compositionally biased toward low complexity: residues 650–671 (AFKA…AAQS) and 700–709 (YGAPPGWHAP). Over residues 710–720 (GWPPQQPPDYW) the composition is skewed to pro residues. The span at 721–732 (YPPEQQPSQSPY) shows a compositional bias: low complexity. The span at 733–762 (WPQPAPSYPGQAPPPYPSYPPCPSYPPPGQ) shows a compositional bias: pro residues.

This sequence in the central section; belongs to the AAA ATPase family. It in the C-terminal section; belongs to the peptidase M41 family. As to quaternary structure, homohexamer. Zn(2+) serves as cofactor.

It localises to the cell membrane. Acts as a processive, ATP-dependent zinc metallopeptidase for both cytoplasmic and membrane proteins. Plays a role in the quality control of integral membrane proteins. The chain is ATP-dependent zinc metalloprotease FtsH from Mycobacterium leprae (strain TN).